A 585-amino-acid polypeptide reads, in one-letter code: MKPFVIRNLPRFQSTLRSSLLYTNHRPSSRFSLSTRRFTTGATYIRRWKATAAQTLKLSAVNSTVMMKPAKIALDQFIASLFTFLLLYILRRSSNKNKKNRGLVVSQNDTVSKNLETEVDSGTDVIIVGAGVAGSALAHTLGKEGRRVHVIERDFSEQDRIVGELLQPGGYLKLIELGLEDCVKKIDAQRVLGYVLFKDGKHTKLAYPLETFDSDVAGRSFHNGRFVQRMREKALTLSNVRLEQGTVTSLLEEHGTIKGVRYRTKEGNEFRSFAPLTIVCDGCFSNLRRSLCKPKVDVPSTFVGLVLENCELPFANHGHVVLGDPSPILMYPISSSEVRCLVDVPGQKLPPIANGEMAKYLKTRVAPQVPTKVREAFITAVEKGNIRTMPNRSMPADPIPTPGALLLGDAFNMRHPLTGGGMTVALADIVVLRDLLRPIRNLNDKEALSKYIESFYTLRKPVASTINTLADALYKVFLASSDEARTEMREACFDYLSLGGVFSSGPVALLSGLNPRPLSLVLHFFAVAIYAVCRLMLPFPSIESFWLGARIISSASSIIFPIIKAEGVRQMFFPRTIPAIYRAPP.

The N-terminal 45 residues, 1–45 (MKPFVIRNLPRFQSTLRSSLLYTNHRPSSRFSLSTRRFTTGATYI), are a transit peptide targeting the mitochondrion. A helical membrane pass occupies residues 70–90 (AKIALDQFIASLFTFLLLYIL). Residues 132–133 (VA), 152–153 (ER), Arg-160, Arg-231, Val-247, Asp-409, and Met-422 contribute to the FAD site. 3 helical membrane-spanning segments follow: residues 493-513 (FDYL…LSGL), 520-540 (LVLH…LPFP), and 545-565 (FWLG…IIKA).

The protein belongs to the squalene monooxygenase family. FAD is required as a cofactor. Expressed mainly in inflorescences. Detected in seedlings, leaves, stems, and siliques.

The protein localises to the mitochondrion membrane. It carries out the reaction squalene + reduced [NADPH--hemoprotein reductase] + O2 = (S)-2,3-epoxysqualene + oxidized [NADPH--hemoprotein reductase] + H2O + H(+). It participates in terpene metabolism; lanosterol biosynthesis; lanosterol from farnesyl diphosphate: step 2/3. Its function is as follows. Catalyzes the stereospecific oxidation of squalene to (S)-2,3-epoxysqualene, and is considered to be a rate-limiting enzyme in steroid biosynthesis. Produces primarily oxidosqualene. The polypeptide is Squalene epoxidase 2, mitochondrial (SQE2) (Arabidopsis thaliana (Mouse-ear cress)).